The chain runs to 88 residues: Sec-independent protein translocase protein TatA (88 aa).

A helical membrane pass occupies residues 1 to 21 (MGSLSPWHWVVLVVVVVLLFG). Polar residues predominate over residues 49–71 (ENQAQASALETPMQNPTVVQSQR). The tract at residues 49–88 (ENQAQASALETPMQNPTVVQSQRVVPPWSTEQDHTEARPA) is disordered. Basic and acidic residues predominate over residues 79–88 (EQDHTEARPA).

It belongs to the TatA/E family. In terms of assembly, the Tat system comprises two distinct complexes: a TatABC complex, containing multiple copies of TatA, TatB and TatC subunits, and a separate TatA complex, containing only TatA subunits. Substrates initially bind to the TatABC complex, which probably triggers association of the separate TatA complex to form the active translocon.

The protein localises to the cell membrane. Functionally, part of the twin-arginine translocation (Tat) system that transports large folded proteins containing a characteristic twin-arginine motif in their signal peptide across membranes. TatA could form the protein-conducting channel of the Tat system. This Mycobacterium leprae (strain TN) protein is Sec-independent protein translocase protein TatA.